A 474-amino-acid chain; its full sequence is Probable diacyglycerol O-acyltransferase Tgs4 (474 aa).

Histidine 135 serves as the catalytic Proton acceptor.

It belongs to the long-chain O-acyltransferase family.

It carries out the reaction an acyl-CoA + a 1,2-diacyl-sn-glycerol = a triacyl-sn-glycerol + CoA. The protein operates within glycerolipid metabolism; triacylglycerol biosynthesis. Its function is as follows. Required for maintaining the appropriate mycolic acid composition and permeability of the envelope on its exposure to acidic pH. This Mycobacterium tuberculosis (strain CDC 1551 / Oshkosh) protein is Probable diacyglycerol O-acyltransferase Tgs4 (tgs4).